The sequence spans 89 residues: Small ribosomal subunit protein uS14A (89 aa).

The protein belongs to the universal ribosomal protein uS14 family. In terms of assembly, part of the 30S ribosomal subunit. Contacts proteins S3 and S10.

Its function is as follows. Binds 16S rRNA, required for the assembly of 30S particles and may also be responsible for determining the conformation of the 16S rRNA at the A site. This chain is Small ribosomal subunit protein uS14A, found in Streptococcus agalactiae serotype Ia (strain ATCC 27591 / A909 / CDC SS700).